The following is a 133-amino-acid chain: Large ribosomal subunit protein uL15 (133 aa).

Positions 1 to 58 (MALQNLTPAPGSTHATKRLGRGQGSGNGKTAGKGNKGQRARKGYNEKRGFEGGQQPLQ) are disordered. Positions 21 to 35 (RGQGSGNGKTAGKGN) are enriched in gly residues.

Belongs to the universal ribosomal protein uL15 family. Part of the 50S ribosomal subunit.

Its function is as follows. Binds to the 23S rRNA. The chain is Large ribosomal subunit protein uL15 from Campylobacter curvus (strain 525.92).